The following is a 495-amino-acid chain: Flagellin (495 aa).

Belongs to the bacterial flagellin family.

It localises to the secreted. It is found in the bacterial flagellum. In terms of biological role, flagellin is the subunit protein which polymerizes to form the filaments of bacterial flagella. This is Flagellin (fliC) from Salmonella typhimurium (strain LT2 / SGSC1412 / ATCC 700720).